The chain runs to 165 residues: MQRLATIAPPQVHEIWALLSQIPDPEIPVLTITDLGMVRNVTQMGEGWVIGFTPTYSGCPATEHLIGAIREAMTTNGFTPVQVVLQLDPAWTTDWMTPDARERLREYGISPPAGHSCHAHLPPEVRCPRCASVHTTLISEFGSTACKALYRCDSCREPFDYFKCI.

As to quaternary structure, monomer.

It participates in aromatic compound metabolism; phenylacetate degradation. Its function is as follows. Possible component of 1,2-phenylacetyl-CoA epoxidase multicomponent enzyme system which catalyzes the reduction of phenylacetyl-CoA (PA-CoA) to form 1,2-epoxyphenylacetyl-CoA. The subunit D may have a function related to the maturation of the monooxygenase complex, rather than direct involvement in catalysis. PaaD could assist either in maturation of PaaE or PaaA. The protein is Putative 1,2-phenylacetyl-CoA epoxidase, subunit D (paaD) of Escherichia coli (strain K12).